The primary structure comprises 579 residues: Amino acid transporter 1 (579 aa).

Residues 1-83 (MSAKDYDFDI…KRGLSTRHMQ (83 aa)) are Cytoplasmic-facing. A helical transmembrane segment spans residues 84–104 (LMSIGGAIGSGLYVGSGSALA). Topologically, residues 105–108 (DGGP) are extracellular. Residues 109–129 (ASVIINYILIGIMMFFVIYAL) form a helical membrane-spanning segment. Over 130–161 (GEMAVAYPVAGSFNTYATRFIDPAWGFAVSWN) the chain is Cytoplasmic. A helical transmembrane segment spans residues 162 to 184 (YFFNYFVTFPFELTTCAITFTFW). The Extracellular segment spans residues 185 to 186 (TD). The chain crosses the membrane as a helical span at residues 187–207 (VNCAVWISIFLVVVIGINLFG). Topologically, residues 208–215 (VRVFGEVE) are cytoplasmic. The chain crosses the membrane as a helical span at residues 216 to 236 (FVLALIKVVATVGFIILAIII). At 237 to 265 (NCGGVPTDHRGYIGGSIIKQKPFRHGFKG) the chain is on the extracellular side. Residues 266–286 (FCSVYTTAAFSFSGTEIVGLA) traverse the membrane as a helical segment. Topologically, residues 287–303 (AAEVGDPRKTLPGAVKQ) are cytoplasmic. A helical membrane pass occupies residues 304-324 (VFWRVAIFYIVSLILIGLLIS). The Extracellular portion of the chain corresponds to 325–347 (PDDPKLMGNGSASVSPFVLAIQE). Residues 348–368 (ANIKGLPSVFNAVIIISVISV) form a helical membrane-spanning segment. Residues 369-401 (TNSSTYTAGRTLHGMANLKQAPAFFKYTDRLGR) lie on the Cytoplasmic side of the membrane. A helical transmembrane segment spans residues 402–422 (PLIAMIVVLSFGFFAYINEAN). Residues 423–431 (NNGNDISDT) lie on the Extracellular side of the membrane. The chain crosses the membrane as a helical span at residues 432 to 452 (VFDWLLAISGLSNFFTWGSIC). Topologically, residues 453–471 (LSHIMFRLAFKKQGHSLKE) are cytoplasmic. A helical membrane pass occupies residues 472–492 (LGFVSPMGIWGSVIGLGFNIL). Residues 493 to 513 (CLMAEFYVSLFPIGGSPNAND) lie on the Extracellular side of the membrane. A helical transmembrane segment spans residues 514–534 (FFQGYLAACITLVFFIGYKIY). Residues 535-579 (DRSHIPSLDKLDITTGLKTYEYEETKDSSDTGRFRFFKKIINTVC) are Cytoplasmic-facing.

It belongs to the amino acid-polyamine-organocation (APC) superfamily.

The protein resides in the golgi apparatus membrane. It localises to the cell membrane. Functionally, probable amino acid transporter that may play a role in function in microtubule organization since it causes microtubule defects when overexpressed. In Schizosaccharomyces pombe (strain 972 / ATCC 24843) (Fission yeast), this protein is Amino acid transporter 1 (aat1).